The following is a 607-amino-acid chain: Elongation factor 4 (607 aa).

One can recognise a tr-type G domain in the interval 11–193 (KSIRNFSIIA…QIVAKVPAPT (183 aa)). Residues 23 to 28 (DHGKST) and 140 to 143 (NKID) each bind GTP.

This sequence belongs to the TRAFAC class translation factor GTPase superfamily. Classic translation factor GTPase family. LepA subfamily.

It is found in the cell membrane. It carries out the reaction GTP + H2O = GDP + phosphate + H(+). Its function is as follows. Required for accurate and efficient protein synthesis under certain stress conditions. May act as a fidelity factor of the translation reaction, by catalyzing a one-codon backward translocation of tRNAs on improperly translocated ribosomes. Back-translocation proceeds from a post-translocation (POST) complex to a pre-translocation (PRE) complex, thus giving elongation factor G a second chance to translocate the tRNAs correctly. Binds to ribosomes in a GTP-dependent manner. This chain is Elongation factor 4, found in Exiguobacterium sibiricum (strain DSM 17290 / CCUG 55495 / CIP 109462 / JCM 13490 / 255-15).